The sequence spans 749 residues: Soluble starch synthase 2-1, chloroplastic/amyloplastic (749 aa).

Residues 1 to 44 (MAAAAVSSLLAPSGSCYSPGCHSCWGPGPGGGRRLPSPRRRPIT) constitute a chloroplast transit peptide. An ADP-alpha-D-glucose-binding site is contributed by Lys-272.

Belongs to the glycosyltransferase 1 family. Bacterial/plant glycogen synthase subfamily. As to expression, expressed in endosperm, leaves, and weakly in roots.

The protein resides in the plastid. The protein localises to the amyloplast. It is found in the chloroplast. The catalysed reaction is [(1-&gt;4)-alpha-D-glucosyl](n) + ADP-alpha-D-glucose = [(1-&gt;4)-alpha-D-glucosyl](n+1) + ADP + H(+). It participates in glycan biosynthesis; starch biosynthesis. Functionally, may be involved in starch synthesis in endosperm amyloplasts and contribute to the deposition of transient starch in chloroplasts of leaves. The sequence is that of Soluble starch synthase 2-1, chloroplastic/amyloplastic (SSII-1) from Oryza sativa subsp. japonica (Rice).